The chain runs to 533 residues: GMP synthase [glutamine-hydrolyzing] (533 aa).

The Glutamine amidotransferase type-1 domain occupies 25–215 (SIVIFDFGSQ…VFNICKCHAN (191 aa)). C102 serves as the catalytic Nucleophile. Residues H189 and E191 contribute to the active site. Residues 216–408 (WTMGNYIQES…LGLPDEMIWR (193 aa)) enclose the GMPS ATP-PPase domain. Residue 243 to 249 (SGGVDSA) participates in ATP binding.

Homodimer.

It carries out the reaction XMP + L-glutamine + ATP + H2O = GMP + L-glutamate + AMP + diphosphate + 2 H(+). It participates in purine metabolism; GMP biosynthesis; GMP from XMP (L-Gln route): step 1/1. Its function is as follows. Catalyzes the synthesis of GMP from XMP. This is GMP synthase [glutamine-hydrolyzing] from Dehalococcoides mccartyi (strain ATCC BAA-2266 / KCTC 15142 / 195) (Dehalococcoides ethenogenes (strain 195)).